A 606-amino-acid chain; its full sequence is NADH-ubiquinone oxidoreductase chain 5 (606 aa).

16 helical membrane-spanning segments follow: residues 4-24 (FPSLMLTSLLMLTLPIITTTI), 38-58 (NIISYAFITSLIPTMMFIHSG), 87-107 (MIFVPVALFVTWSIMEFSMWY), 114-134 (ITQFFKYLLMFLITMMILVTA), 140-160 (LFIGWEGVGIMSFLLISWWYG), 171-191 (AILYNRIGDIGFIMSMAWFLF), 213-233 (LMGLLLAATGKSAQFGLHPWL), 241-261 (TPVSALLHSSTMVVAGVFLLI), 273-293 (VQTFTLCLGAITTLFTAICAL), 301-320 (IIAFSTSSQLGLMIVTIGIN), 325-347 (AFLHICTHAFFKAMLFMCSGSII), 366-386 (MPFTSTSLIIGSLALTGMPFL), 409-429 (LLITLIATSLTAAYSTRMIFF), 457-477 (LLIGSIFAGFFISNNIYPTTI), 488-508 (LTALAVTILGFMMALELSLAT), and 583-603 (LIKLYFLSFLVTLTLSLLLLM).

This sequence belongs to the complex I subunit 5 family. In terms of assembly, core subunit of respiratory chain NADH dehydrogenase (Complex I) which is composed of 45 different subunits.

It is found in the mitochondrion inner membrane. The catalysed reaction is a ubiquinone + NADH + 5 H(+)(in) = a ubiquinol + NAD(+) + 4 H(+)(out). In terms of biological role, core subunit of the mitochondrial membrane respiratory chain NADH dehydrogenase (Complex I) which catalyzes electron transfer from NADH through the respiratory chain, using ubiquinone as an electron acceptor. Essential for the catalytic activity and assembly of complex I. This is NADH-ubiquinone oxidoreductase chain 5 (MT-ND5) from Ceratotherium simum (White rhinoceros).